A 186-amino-acid chain; its full sequence is Tumor necrosis factor, alpha-induced protein 8-like protein 2 A (186 aa).

This sequence belongs to the TNFAIP8 family. TNFAIP8L2 subfamily.

Functionally, acts as a negative regulator of innate and adaptive immunity by maintaining immune homeostasis. Negative regulator of Toll-like receptor and T-cell receptor function. Prevents hyperresponsiveness of the immune system and maintains immune homeostasis. Inhibits jun/ap1 and NF-kappa-B activation. Promotes Fas-induced apoptosis. In Danio rerio (Zebrafish), this protein is Tumor necrosis factor, alpha-induced protein 8-like protein 2 A (tnfaip8l2a).